Consider the following 646-residue polypeptide: Kinesin-like protein klp-20 (646 aa).

One can recognise a Kinesin motor domain in the interval 6–331; that stretch reads KVKVVVRCRP…LRYANRAKNI (326 aa). 91–98 serves as a coordination point for ATP; sequence GQTGTGKT. Residues 342-552 adopt a coiled-coil conformation; that stretch reads KDAQLRKFQL…LRKELLLNIA (211 aa). Residues 525 to 550 form an interaction with klp-11 region; that stretch reads LEEDHQRQVEAMLDDIRQLRKELLLN. Residues 623–646 form a disordered region; it reads TAEHRPRTSSKKHRASIRLQQLLT. Residues 629–638 show a composition bias toward basic residues; that stretch reads RTSSKKHRAS.

It belongs to the TRAFAC class myosin-kinesin ATPase superfamily. Kinesin family. Kinesin II subfamily. As to quaternary structure, component of the kinesin II motor complex, a heterotrimeric complex composed of kap-1, klp-11 and klp-20. Interacts (via C-terminus) with klp-11 (via C-terminus) to form a heterodimer. Furthermore, within the heterodimer, the C-termini of klp-20 and klp-11 interact to form a coiled coil (stalk) or tail domain, and this is necessary for association with kap-1, and kinesin II motor complex activity upon IFT cargo binding. Prior to cargo binding, the klp-11/klp-20 heterodimer is autoinhibited by the tail domain of the heterodimer, which folds onto the kinesin motor domain. Cargo binding to the heterodimer relieves the autoinhibition, and allows for an extended conformation of the tail domain, and function of the heterodimer.

The protein resides in the cell projection. The protein localises to the cilium. Its subcellular location is the cytoplasm. It is found in the cytoskeleton. In terms of biological role, component of the kinesin II motor complex (composed of kap-1 and the heterodimeric motor proteins klp-11 and klp-20) which is required for intraflagellar transport (IFT). Heterodimerizes with klp-11 to form a 'processive' molecular motor upon IFT cargo binding, which, within the kinesin II motor complex, binds to and moves along microtubules in a unidirectional manner (without dissociation of the heterodimer), and in turn, is responsible for the IFT of cargo. Specifically, the kinesin II motor complex, together with the kinesin motor protein osm-3 moves along microtubules and is required for anterograde IFT along the middle segment of the sensory neuron cilia. In particular, the kinesin II motor complex delivers specific ciliary cargo proteins such as che-3 which are related to motility to ciliary tips. This is likely mediated by IFT complexes A and B. The protein is Kinesin-like protein klp-20 of Caenorhabditis elegans.